The sequence spans 103 residues: Gibberellin-regulated protein 13 (103 aa).

An N-terminal signal peptide occupies residues 1–20; it reads MATKLSIIVFSIVVLHLLLS.

This sequence belongs to the GASA family. In terms of processing, six disulfide bonds may be present.

It localises to the secreted. Its function is as follows. Gibberellin-regulated protein that may function in hormonal controlled steps of development such as seed germination, flowering and seed maturation. In Arabidopsis thaliana (Mouse-ear cress), this protein is Gibberellin-regulated protein 13 (GASA13).